We begin with the raw amino-acid sequence, 107 residues long: UPF0145 protein ETA_21660 (107 aa).

It belongs to the UPF0145 family.

This chain is UPF0145 protein ETA_21660, found in Erwinia tasmaniensis (strain DSM 17950 / CFBP 7177 / CIP 109463 / NCPPB 4357 / Et1/99).